The chain runs to 193 residues: CASP-like protein 1D1 (193 aa).

The interval 1 to 24 (MGYETKSTLDTERSTAPGTGTTTK) is disordered. Residues 1–30 (MGYETKSTLDTERSTAPGTGTTTKSCSMTQ) lie on the Cytoplasmic side of the membrane. Polar residues predominate over residues 14-24 (STAPGTGTTTK). The chain crosses the membrane as a helical span at residues 31 to 51 (VVLRFVLFAATLTSIVVMVTS). Residues 52 to 76 (KQTKNIFLPGTPIRIPAAEFTNSPA) lie on the Extracellular side of the membrane. The helical transmembrane segment at 77–97 (LIYFVVALSVACFYSIVSTFV) threads the bilayer. Residues 98–108 (TVSAFKKHSCS) are Cytoplasmic-facing. A helical transmembrane segment spans residues 109-129 (AVLLLNLAIMDAVMVGIVASA). At 130 to 162 (TGAGGGVAYLGLKGNKEVRWGKICHIYDKFCRH) the chain is on the extracellular side. Residues 163-183 (VGGAIAVSLFASVVLLLLSII) traverse the membrane as a helical segment. Over 184–193 (SVLSLYKKIR) the chain is Cytoplasmic.

Belongs to the Casparian strip membrane proteins (CASP) family. In terms of assembly, homodimer and heterodimers.

Its subcellular location is the cell membrane. The protein is CASP-like protein 1D1 of Arabidopsis thaliana (Mouse-ear cress).